A 159-amino-acid polypeptide reads, in one-letter code: MAERPGPPGGAVSATAYPDTPAEFPPHLQAGAMRRRFWGVFNCLCAGAFGALAAASAKLAFGSEVSMGLCVLGIIVMASTNSLMWTFFSRGLSFSMSSAIASVTVTFSNILSSAFLGYVLYGECQEVLWWGGVFLILCGLTLIHRKLPPTWKPLPHKQQ.

4 helical membrane passes run 37–57 (FWGV…AASA), 59–79 (LAFG…VMAS), 100–120 (IASV…GYVL), and 124–144 (CQEV…TLIH).

The protein localises to the membrane. This Homo sapiens (Human) protein is Transmembrane protein 42 (TMEM42).